We begin with the raw amino-acid sequence, 147 residues long: Ubiquitin-conjugating enzyme E2 D2 (147 aa).

Residues 1 to 147 (MALKRIHKEL…AREWTQKYAM (147 aa)) enclose the UBC core domain. C85 acts as the Glycyl thioester intermediate in catalysis.

Belongs to the ubiquitin-conjugating enzyme family. In terms of assembly, interacts with SCF (SKP1-CUL1-F-box protein) E3 ubiquitin ligase complex. Interacts with CNOT4 (via RING domain). Interacts with E3 ubiquitin-protein ligases CBLC, PJA1 and PJA2. Interacts with PDZRN3. Interacts with PPP1R11. Interacts with E3 ubiquitin-protein ligase PHF7; the interaction inhibits cleavage of PHF7 and promotes association of the complex with the nucleosome core particle.

It catalyses the reaction S-ubiquitinyl-[E1 ubiquitin-activating enzyme]-L-cysteine + [E2 ubiquitin-conjugating enzyme]-L-cysteine = [E1 ubiquitin-activating enzyme]-L-cysteine + S-ubiquitinyl-[E2 ubiquitin-conjugating enzyme]-L-cysteine.. The enzyme catalyses S-ubiquitinyl-[E1 ubiquitin-activating enzyme]-L-cysteine + [acceptor protein]-L-lysine = [E1 ubiquitin-activating enzyme]-L-cysteine + N(6)-monoubiquitinyl-[acceptor protein]-L-lysine.. It functions in the pathway protein modification; protein ubiquitination. Functionally, accepts ubiquitin from the E1 complex and catalyzes its covalent attachment to other proteins. In vitro catalyzes 'Lys-48'-linked polyubiquitination. Mediates the selective degradation of short-lived and abnormal proteins. Functions in the E6/E6-AP-induced ubiquitination of p53/TP53. Mediates ubiquitination of PEX5 and SQSTM1 and autoubiquitination of STUB1 and TRAF6. Involved in the signal-induced conjugation and subsequent degradation of NFKBIA, FBXW2-mediated GCM1 ubiquitination and degradation, MDM2-dependent degradation of p53/TP53 and the activation of MAVS in the mitochondria by RIGI in response to viral infection. Essential for viral activation of IRF3. This is Ubiquitin-conjugating enzyme E2 D2 (UBE2D2) from Bos taurus (Bovine).